The sequence spans 364 residues: Coproporphyrin III ferrochelatase (364 aa).

Arginine 29 and tyrosine 118 together coordinate Fe-coproporphyrin III. Positions 169 and 250 each coordinate Fe(2+).

The protein belongs to the ferrochelatase family.

It localises to the cytoplasm. It carries out the reaction Fe-coproporphyrin III + 2 H(+) = coproporphyrin III + Fe(2+). Its pathway is porphyrin-containing compound metabolism; protoheme biosynthesis. Involved in coproporphyrin-dependent heme b biosynthesis. Catalyzes the insertion of ferrous iron into coproporphyrin III to form Fe-coproporphyrin III. The protein is Coproporphyrin III ferrochelatase of Streptococcus pneumoniae (strain 70585).